Consider the following 213-residue polypeptide: A-type ATP synthase subunit D (213 aa).

This sequence belongs to the V-ATPase D subunit family. Has multiple subunits with at least A(3), B(3), C, D, E, F, H, I and proteolipid K(x).

It localises to the cell membrane. Component of the A-type ATP synthase that produces ATP from ADP in the presence of a proton gradient across the membrane. This is A-type ATP synthase subunit D from Saccharolobus islandicus (strain Y.N.15.51 / Yellowstone #2) (Sulfolobus islandicus).